The sequence spans 427 residues: Putative tyrosine recombinase XerC (427 aa).

One can recognise a Core-binding (CB) domain in the interval 1 to 81; it reads MTPQQLTEEY…HLRTIWGYAI (81 aa). A Tyr recombinase domain is found at 116 to 305; sequence RARSWLSMQV…DYDHMRAVLH (190 aa). Active-site residues include R156, K183, H256, R259, and H283. Residue Y292 is the O-(3'-phospho-DNA)-tyrosine intermediate of the active site. Disordered regions lie at residues 323-384 and 401-427; these read SGSP…PPDT and RAAT…DSLA. Residues 350 to 362 are compositionally biased toward basic and acidic residues; the sequence is ARTEPSEPREHTQ. Over residues 402–413 the composition is skewed to low complexity; sequence AATASAVPAATS.

The protein belongs to the 'phage' integrase family.

The protein localises to the cytoplasm. In terms of biological role, site-specific tyrosine recombinase, which acts by catalyzing the cutting and rejoining of the recombining DNA molecules. The chain is Putative tyrosine recombinase XerC from Pseudomonas aeruginosa.